The chain runs to 209 residues: V-type ATP synthase subunit D 2 (209 aa).

Belongs to the V-ATPase D subunit family.

Its function is as follows. Produces ATP from ADP in the presence of a proton gradient across the membrane. The polypeptide is V-type ATP synthase subunit D 2 (atpD2) (Treponema pallidum (strain Nichols)).